The chain runs to 790 residues: LPS-assembly protein LptD (790 aa).

Positions 1–20 are cleaved as a signal peptide; that stretch reads MRMLRWLILSAFSVAGAVQA.

The protein belongs to the LptD family. In terms of assembly, component of the lipopolysaccharide transport and assembly complex. Interacts with LptE and LptA.

It is found in the cell outer membrane. In terms of biological role, together with LptE, is involved in the assembly of lipopolysaccharide (LPS) at the surface of the outer membrane. The sequence is that of LPS-assembly protein LptD from Bordetella pertussis (strain Tohama I / ATCC BAA-589 / NCTC 13251).